The primary structure comprises 447 residues: Na(+)-translocating NADH-quinone reductase subunit A (447 aa).

It belongs to the NqrA family. As to quaternary structure, composed of six subunits; NqrA, NqrB, NqrC, NqrD, NqrE and NqrF.

The catalysed reaction is a ubiquinone + n Na(+)(in) + NADH + H(+) = a ubiquinol + n Na(+)(out) + NAD(+). Functionally, NQR complex catalyzes the reduction of ubiquinone-1 to ubiquinol by two successive reactions, coupled with the transport of Na(+) ions from the cytoplasm to the periplasm. NqrA to NqrE are probably involved in the second step, the conversion of ubisemiquinone to ubiquinol. This is Na(+)-translocating NADH-quinone reductase subunit A from Yersinia pseudotuberculosis serotype O:1b (strain IP 31758).